The sequence spans 289 residues: uncharacterized protein (289 aa).

10 helical membrane passes run 7 to 27, 33 to 53, 65 to 85, 92 to 112, 123 to 143, 148 to 168, 182 to 202, 212 to 232, 241 to 261, and 265 to 285; these read LLLA…KIGL, FNLA…WVFW, WLHL…FQFL, ATNA…WGLV, GVFL…LEFF, IFGD…TVLG, AYAF…SGFA, VAAL…VWYY, SVAV…FYAL, and PDFF…LTTA. 2 EamA domains span residues 14–136 and 159–285; these read LIWA…LIVS and FLWA…LTTA.

This sequence belongs to the EamA transporter family.

Its subcellular location is the cell membrane. This is an uncharacterized protein from Archaeoglobus fulgidus (strain ATCC 49558 / DSM 4304 / JCM 9628 / NBRC 100126 / VC-16).